The following is a 309-amino-acid chain: Glutaminase (309 aa).

The substrate site is built by serine 65, asparagine 117, glutamate 162, asparagine 169, tyrosine 193, tyrosine 245, and valine 263.

It belongs to the glutaminase family. In terms of assembly, homotetramer.

The enzyme catalyses L-glutamine + H2O = L-glutamate + NH4(+). The protein is Glutaminase of Shouchella clausii (strain KSM-K16) (Alkalihalobacillus clausii).